The sequence spans 145 residues: MGSETKHSAKVKIVTRESPPSAKEHMRPTKTQILVPPTQSLPNGKKPNFGKSTKQRREPRERTSKTGHEDDKATMVTVNIDAFLHDKAPKKKSCKYKKKKTRQYQDRAAASIDSKPHVAGHTAFAGASFTTDIPHEAALPKPSFV.

2 disordered regions span residues 1-74 (MGSE…DKAT) and 89-115 (PKKK…IDSK). Positions 29 to 42 (TKTQILVPPTQSLP) are enriched in polar residues. A compositionally biased stretch (basic and acidic residues) spans 55 to 73 (QRREPRERTSKTGHEDDKA). The segment covering 89 to 102 (PKKKSCKYKKKKTR) has biased composition (basic residues).

The protein belongs to the EDC family.

The protein resides in the cytoplasm. It localises to the nucleus. Its function is as follows. mRNA-binding protein which stimulates mRNA decapping by DCP1 and DCP2. This is Enhancer of mRNA-decapping protein 2 (EDC2) from Saccharomyces cerevisiae (strain ATCC 204508 / S288c) (Baker's yeast).